Here is a 164-residue protein sequence, read N- to C-terminus: uncharacterized protein (164 aa).

The interval 107–136 (QSESGGSGSNSRSSSDTTEPTDPPAPVRKT) is disordered.

This is an uncharacterized protein from Escherichia coli (Bacteriophage T4).